Here is a 382-residue protein sequence, read N- to C-terminus: 8-amino-7-oxononanoate synthase (382 aa).

Arginine 26 serves as a coordination point for substrate. Glycine 104–tyrosine 105 provides a ligand contact to pyridoxal 5'-phosphate. Histidine 129 provides a ligand contact to substrate. Pyridoxal 5'-phosphate-binding positions include serine 175, aspartate 200–histidine 203, and threonine 232–lysine 235. Lysine 235 is subject to N6-(pyridoxal phosphate)lysine. Residue threonine 345 coordinates substrate.

This sequence belongs to the class-II pyridoxal-phosphate-dependent aminotransferase family. BioF subfamily. In terms of assembly, homodimer. Pyridoxal 5'-phosphate serves as cofactor.

It catalyses the reaction 6-carboxyhexanoyl-[ACP] + L-alanine + H(+) = (8S)-8-amino-7-oxononanoate + holo-[ACP] + CO2. The protein operates within cofactor biosynthesis; biotin biosynthesis. Functionally, catalyzes the decarboxylative condensation of pimeloyl-[acyl-carrier protein] and L-alanine to produce 8-amino-7-oxononanoate (AON), [acyl-carrier protein], and carbon dioxide. This Mycolicibacterium smegmatis (strain ATCC 700084 / mc(2)155) (Mycobacterium smegmatis) protein is 8-amino-7-oxononanoate synthase (bioF).